A 111-amino-acid chain; its full sequence is Large ribosomal subunit protein uL22 (111 aa).

The protein belongs to the universal ribosomal protein uL22 family. As to quaternary structure, part of the 50S ribosomal subunit.

This protein binds specifically to 23S rRNA; its binding is stimulated by other ribosomal proteins, e.g. L4, L17, and L20. It is important during the early stages of 50S assembly. It makes multiple contacts with different domains of the 23S rRNA in the assembled 50S subunit and ribosome. Its function is as follows. The globular domain of the protein is located near the polypeptide exit tunnel on the outside of the subunit, while an extended beta-hairpin is found that lines the wall of the exit tunnel in the center of the 70S ribosome. In Xanthomonas euvesicatoria pv. vesicatoria (strain 85-10) (Xanthomonas campestris pv. vesicatoria), this protein is Large ribosomal subunit protein uL22.